The chain runs to 331 residues: Tetraacyldisaccharide 4'-kinase (331 aa).

59-66 contacts ATP; that stretch reads FVGGTGKT.

Belongs to the LpxK family.

It carries out the reaction a lipid A disaccharide + ATP = a lipid IVA + ADP + H(+). Its pathway is glycolipid biosynthesis; lipid IV(A) biosynthesis; lipid IV(A) from (3R)-3-hydroxytetradecanoyl-[acyl-carrier-protein] and UDP-N-acetyl-alpha-D-glucosamine: step 6/6. Transfers the gamma-phosphate of ATP to the 4'-position of a tetraacyldisaccharide 1-phosphate intermediate (termed DS-1-P) to form tetraacyldisaccharide 1,4'-bis-phosphate (lipid IVA). The sequence is that of Tetraacyldisaccharide 4'-kinase from Alkalilimnicola ehrlichii (strain ATCC BAA-1101 / DSM 17681 / MLHE-1).